A 187-amino-acid polypeptide reads, in one-letter code: UPF0301 protein Cpar_0662 (187 aa).

This sequence belongs to the UPF0301 (AlgH) family.

The sequence is that of UPF0301 protein Cpar_0662 from Chlorobaculum parvum (strain DSM 263 / NCIMB 8327) (Chlorobium vibrioforme subsp. thiosulfatophilum).